The following is a 210-amino-acid chain: NAD(P)H-quinone oxidoreductase subunit I (210 aa).

2 consecutive 4Fe-4S ferredoxin-type domains span residues 54–83 (GRIHFEFDKCIACEICVRVCPIDLPVVDWA) and 94–123 (YSYSIDFGVCIFCANCVEFCPTNCLSVTED). [4Fe-4S] cluster contacts are provided by Cys63, Cys66, Cys69, Cys73, Cys103, Cys106, Cys109, and Cys113.

This sequence belongs to the complex I 23 kDa subunit family. As to quaternary structure, NDH-1 is composed of at least 11 different subunits. [4Fe-4S] cluster is required as a cofactor.

The protein resides in the cellular thylakoid membrane. It catalyses the reaction a plastoquinone + NADH + (n+1) H(+)(in) = a plastoquinol + NAD(+) + n H(+)(out). It carries out the reaction a plastoquinone + NADPH + (n+1) H(+)(in) = a plastoquinol + NADP(+) + n H(+)(out). Its function is as follows. NDH-1 shuttles electrons from an unknown electron donor, via FMN and iron-sulfur (Fe-S) centers, to quinones in the respiratory and/or the photosynthetic chain. The immediate electron acceptor for the enzyme in this species is believed to be plastoquinone. Couples the redox reaction to proton translocation, and thus conserves the redox energy in a proton gradient. This chain is NAD(P)H-quinone oxidoreductase subunit I, found in Synechococcus sp. (strain JA-2-3B'a(2-13)) (Cyanobacteria bacterium Yellowstone B-Prime).